The following is a 162-amino-acid chain: UPF0114 protein Sden_0436 (162 aa).

3 helical membrane passes run 15–35 (IMAPIYLGLSLILFALGIKFF), 53–73 (LVLITLSLIDITLVGGLLIMV), and 136–156 (IMWYLLIHITFVLSAFAMGYL).

It belongs to the UPF0114 family.

The protein localises to the cell membrane. This chain is UPF0114 protein Sden_0436, found in Shewanella denitrificans (strain OS217 / ATCC BAA-1090 / DSM 15013).